The chain runs to 249 residues: L-fucose operon activator (249 aa).

The HTH deoR-type domain occupies 1-56 (MNYRDELILQWVNQQGKASVIELAQHCDISVETIRRDLNKLANKGLLHRTHGGAVS). Residues 18 to 37 (ASVIELAQHCDISVETIRRD) constitute a DNA-binding region (H-T-H motif).

Its function is as follows. Transcriptional activator of the fuc operon. This is L-fucose operon activator (fucR) from Haemophilus influenzae (strain ATCC 51907 / DSM 11121 / KW20 / Rd).